We begin with the raw amino-acid sequence, 487 residues long: 4-alpha-glucanotransferase (487 aa).

It belongs to the disproportionating enzyme family.

The protein localises to the cytoplasm. It catalyses the reaction Transfers a segment of a (1-&gt;4)-alpha-D-glucan to a new position in an acceptor, which may be glucose or a (1-&gt;4)-alpha-D-glucan.. Functionally, catalyzes a disproportionation reaction in which single or multiple glucose units from oligosaccharides are transferred to the 4-hydroxyl group of acceptor sugars. Glucose, maltose and maltotriose can act as acceptor, whereas of the three only maltotriose can act as donor. The polypeptide is 4-alpha-glucanotransferase (malQ) (Clostridium butyricum).